We begin with the raw amino-acid sequence, 303 residues long: Probable 5-dehydro-4-deoxyglucarate dehydratase (303 aa).

It belongs to the DapA family.

It carries out the reaction 5-dehydro-4-deoxy-D-glucarate + H(+) = 2,5-dioxopentanoate + CO2 + H2O. Its pathway is carbohydrate acid metabolism; D-glucarate degradation; 2,5-dioxopentanoate from D-glucarate: step 2/2. The polypeptide is Probable 5-dehydro-4-deoxyglucarate dehydratase (Agrobacterium fabrum (strain C58 / ATCC 33970) (Agrobacterium tumefaciens (strain C58))).